Reading from the N-terminus, the 370-residue chain is tRNA-specific 2-thiouridylase MnmA (370 aa).

Residues 14–21 and methionine 40 contribute to the ATP site; that span reads GMSGGVDS. The interaction with target base in tRNA stretch occupies residues 100 to 102; sequence NPD. The Nucleophile role is filled by cysteine 105. A disulfide bond links cysteine 105 and cysteine 205. Glycine 129 is an ATP binding site. Positions 155 to 157 are interaction with tRNA; that stretch reads KDQ. Cysteine 205 functions as the Cysteine persulfide intermediate in the catalytic mechanism. An interaction with tRNA region spans residues 321–322; the sequence is RY.

The protein belongs to the MnmA/TRMU family.

Its subcellular location is the cytoplasm. The enzyme catalyses S-sulfanyl-L-cysteinyl-[protein] + uridine(34) in tRNA + AH2 + ATP = 2-thiouridine(34) in tRNA + L-cysteinyl-[protein] + A + AMP + diphosphate + H(+). In terms of biological role, catalyzes the 2-thiolation of uridine at the wobble position (U34) of tRNA, leading to the formation of s(2)U34. This Bordetella avium (strain 197N) protein is tRNA-specific 2-thiouridylase MnmA.